Reading from the N-terminus, the 669-residue chain is Methionine--tRNA ligase (669 aa).

The short motif at 15-25 (PYANGPAHIGH) is the 'HIGH' region element. Cys-146, Cys-149, Cys-158, and Cys-162 together coordinate Zn(2+). Positions 328–332 (KFSKS) match the 'KMSKS' region motif. Residue Lys-331 coordinates ATP. The 100-residue stretch at 570-669 (QFKALDLRVG…KEVPAGCGIR (100 aa)) folds into the tRNA-binding domain.

The protein belongs to the class-I aminoacyl-tRNA synthetase family. MetG type 1 subfamily. In terms of assembly, homodimer. Requires Zn(2+) as cofactor.

The protein resides in the cytoplasm. The catalysed reaction is tRNA(Met) + L-methionine + ATP = L-methionyl-tRNA(Met) + AMP + diphosphate. Functionally, is required not only for elongation of protein synthesis but also for the initiation of all mRNA translation through initiator tRNA(fMet) aminoacylation. The polypeptide is Methionine--tRNA ligase (Methanothrix thermoacetophila (strain DSM 6194 / JCM 14653 / NBRC 101360 / PT) (Methanosaeta thermophila)).